The sequence spans 422 residues: Glycine amidinotransferase, mitochondrial (422 aa).

A mitochondrion-targeting transit peptide spans methionine 1–glutamine 37. Catalysis depends on residues aspartate 253 and histidine 302. Cysteine 406 functions as the Amidino-cysteine intermediate in the catalytic mechanism.

This sequence belongs to the amidinotransferase family. In terms of assembly, homodimer.

The protein localises to the mitochondrion inner membrane. The enzyme catalyses L-arginine + glycine = guanidinoacetate + L-ornithine. The protein operates within amine and polyamine biosynthesis; creatine biosynthesis; creatine from L-arginine and glycine: step 1/2. Its function is as follows. Catalyzes the biosynthesis of guanidinoacetate, the immediate precursor of creatine. Creatine plays a vital role in energy metabolism in muscle tissues. May play a role in embryonic and central nervous system development. The chain is Glycine amidinotransferase, mitochondrial from Xenopus tropicalis (Western clawed frog).